The chain runs to 80 residues: Serine palmitoyltransferase small subunit A-A (80 aa).

The Cytoplasmic portion of the chain corresponds to 1-21 (MKVLCEDVNGPRSSLGRAWSH). Residues 22–38 (MSWLYYQYLLVTALYML) form a helical membrane-spanning segment. At 39–43 (EPWER) the chain is on the lumenal side. The chain crosses the membrane as a helical span at residues 44-66 (TVFNSMLVSIVGMALYTGYIFMP). Residues 67 to 80 (QHILAILHYFEIVQ) lie on the Cytoplasmic side of the membrane.

The protein belongs to the SPTSS family. SPTSSA subfamily. Component of the serine palmitoyltransferase (SPT) complex, which is composed of SPTLC1, SPTLC2 or SPTLC3 and SPTSSA or SPTSSB. The heterodimer consisting of SPTLC1 and SPTLC2/SPTLC3 forms the catalytic core of the enzyme, while SPTSSA or SPTSSB subunits determine substrate specificity. SPT also interacts with ORMDL proteins, especially ORMDL3, which negatively regulate SPT activity in the presence of ceramides.

The protein resides in the endoplasmic reticulum membrane. It participates in lipid metabolism; sphingolipid metabolism. Functionally, component of the serine palmitoyltransferase multisubunit enzyme (SPT) that catalyzes the initial and rate-limiting step in sphingolipid biosynthesis by condensing L-serine and activated acyl-CoA (most commonly palmitoyl-CoA) to form long-chain bases. The SPT complex is composed of SPTLC1, SPTLC2 or SPTLC3 and SPTSSA or SPTSSB. Within this complex, the heterodimer consisting of SPTLC1 and SPTLC2/SPTLC3 forms the catalytic core. Within the SPT complex, SPTSSA stimulates the catalytic activity and plays a role in substrate specificity, which depends upon the overall complex composition. The SPTLC1-SPTLC2-SPTSSA complex shows a strong preference for C16-CoA substrate, while the SPTLC1-SPTLC3-SPTSSA isozyme uses both C14-CoA and C16-CoA as substrates, with a slight preference for C14-CoA. Independently of its action as a SPT component, may be involved in MBOAT7 localization to mitochondria-associated membranes, a membrane bridge between the endoplasmic reticulum and mitochondria, may hence affect MBOAT7-catalyzed incorporation of arachidonic acid into phosphatidylinositol. In Xenopus laevis (African clawed frog), this protein is Serine palmitoyltransferase small subunit A-A (sptssa-a).